We begin with the raw amino-acid sequence, 465 residues long: Fumarate hydratase class II (465 aa).

Residues 100–102, 131–134, 141–143, and Thr189 contribute to the substrate site; these read SGT, HPND, and SSN. His190 acts as the Proton donor/acceptor in catalysis. Ser320 is a catalytic residue. Residues Ser321 and 326–328 contribute to the substrate site; that span reads KVN.

It belongs to the class-II fumarase/aspartase family. Fumarase subfamily. As to quaternary structure, homotetramer.

Its subcellular location is the cytoplasm. The enzyme catalyses (S)-malate = fumarate + H2O. Its pathway is carbohydrate metabolism; tricarboxylic acid cycle; (S)-malate from fumarate: step 1/1. Its function is as follows. Involved in the TCA cycle. Catalyzes the stereospecific interconversion of fumarate to L-malate. This is Fumarate hydratase class II from Mesorhizobium japonicum (strain LMG 29417 / CECT 9101 / MAFF 303099) (Mesorhizobium loti (strain MAFF 303099)).